Consider the following 391-residue polypeptide: Ferrochelatase (391 aa).

Residues His-196 and Glu-281 each contribute to the Fe cation site.

This sequence belongs to the ferrochelatase family.

The protein localises to the cytoplasm. The enzyme catalyses heme b + 2 H(+) = protoporphyrin IX + Fe(2+). It functions in the pathway porphyrin-containing compound metabolism; protoheme biosynthesis; protoheme from protoporphyrin-IX: step 1/1. Functionally, catalyzes the ferrous insertion into protoporphyrin IX. This is Ferrochelatase from Synechococcus sp. (strain CC9605).